We begin with the raw amino-acid sequence, 115 residues long: Large ribosomal subunit protein bL19 (115 aa).

The protein belongs to the bacterial ribosomal protein bL19 family.

Functionally, this protein is located at the 30S-50S ribosomal subunit interface and may play a role in the structure and function of the aminoacyl-tRNA binding site. The polypeptide is Large ribosomal subunit protein bL19 (Nitrosococcus oceani (strain ATCC 19707 / BCRC 17464 / JCM 30415 / NCIMB 11848 / C-107)).